A 275-amino-acid chain; its full sequence is tRNA pseudouridine synthase A (275 aa).

Asp60 acts as the Nucleophile in catalysis. A substrate-binding site is contributed by Tyr119.

Belongs to the tRNA pseudouridine synthase TruA family. Homodimer.

The catalysed reaction is uridine(38/39/40) in tRNA = pseudouridine(38/39/40) in tRNA. Formation of pseudouridine at positions 38, 39 and 40 in the anticodon stem and loop of transfer RNAs. The chain is tRNA pseudouridine synthase A from Synechocystis sp. (strain ATCC 27184 / PCC 6803 / Kazusa).